The chain runs to 340 residues: N-acetyl-gamma-glutamyl-phosphate reductase (340 aa).

Cys-146 is a catalytic residue.

This sequence belongs to the NAGSA dehydrogenase family. Type 1 subfamily.

It is found in the cytoplasm. The enzyme catalyses N-acetyl-L-glutamate 5-semialdehyde + phosphate + NADP(+) = N-acetyl-L-glutamyl 5-phosphate + NADPH + H(+). It participates in amino-acid biosynthesis; L-arginine biosynthesis; N(2)-acetyl-L-ornithine from L-glutamate: step 3/4. Its function is as follows. Catalyzes the NADPH-dependent reduction of N-acetyl-5-glutamyl phosphate to yield N-acetyl-L-glutamate 5-semialdehyde. In Streptococcus mutans serotype c (strain ATCC 700610 / UA159), this protein is N-acetyl-gamma-glutamyl-phosphate reductase.